A 211-amino-acid chain; its full sequence is Redox-sensing transcriptional repressor Rex (211 aa).

The H-T-H motif DNA-binding region spans 17-56 (LYYRFIQNFAQEGMERISSKELSEAMKIDSATIRRDFSYF). 91–96 (GVGNLG) contacts NAD(+).

It belongs to the transcriptional regulatory Rex family. In terms of assembly, homodimer.

The protein localises to the cytoplasm. Modulates transcription in response to changes in cellular NADH/NAD(+) redox state. The sequence is that of Redox-sensing transcriptional repressor Rex from Lysinibacillus sphaericus (strain C3-41).